The sequence spans 329 residues: Phosphatidylcholine:ceramide cholinephosphotransferase 3 (329 aa).

Topologically, residues 1–26 (MAVPPVEMYSGSFWNRMRKPLPLRTQ) are cytoplasmic. A helical membrane pass occupies residues 27–47 (VIRFTVVFVIVSFILAVALQI). Residues 48-74 (THERMPDPKVTKPLPDLGFELLTKVPG) lie on the Extracellular side of the membrane. The helical transmembrane segment at 75-95 (MYVLADCCIGFLNILSVFTAF) threads the bilayer. Residues 96 to 147 (KLYLLHRHCVGSGEPELPCNIPGVSRFFLSVWLCKENCRIELRNIHTIAWIR) are Cytoplasmic-facing. Residues 148–168 (FITSYALLLLFRSAVIVMTSL) traverse the membrane as a helical segment. Over 169–211 (PAPDDLCQNPPKIENPVKNVILTVLTAGAGSIHCGDLMYSGHT) the chain is Extracellular. Residues 212 to 232 (VILTLHLMFHWIYGAMVHWSF) traverse the membrane as a helical segment. A topological domain (cytoplasmic) is located at residue Arg-233. The helical transmembrane segment at 234 to 254 (PVVTVVAIFGYYCIVASRFHY) threads the bilayer. At 255–257 (TDD) the chain is on the extracellular side. The helical transmembrane segment at 258 to 278 (VLVAIYLTIATFIAVGHNADG) threads the bilayer. Residues 279–329 (APWQLQLFIRWWPCCGANSREVTEDSQPVMVAFKSEAAGQSSRKVVDERNH) are Cytoplasmic-facing.

The protein belongs to the sphingomyelin synthase family.

Its subcellular location is the membrane. The enzyme catalyses an N-acylsphing-4-enine + a 1,2-diacyl-sn-glycero-3-phosphocholine = a sphingomyelin + a 1,2-diacyl-sn-glycerol. The catalysed reaction is an N-acylsphinganine + a 1,2-diacyl-sn-glycero-3-phosphocholine = an N-acylsphinganine-1-phosphocholine + a 1,2-diacyl-sn-glycerol. It catalyses the reaction an N-acylsphing-4-enine + a 1,2-diacyl-sn-glycero-3-phosphoethanolamine = an N-acylsphing-4-enine 1-phosphoethanolamine + a 1,2-diacyl-sn-glycerol. It carries out the reaction an N-acylsphinganine + a 1,2-diacyl-sn-glycero-3-phosphoethanolamine = an N-acylsphinganine-1-phosphoethanolamine + a 1,2-diacyl-sn-glycerol. Its function is as follows. Bifunctional sphingomyelin (SM)/ethanolamine phosphorylceramide (EPC) synthase with minimal inositol phosphorylceramide (IPC) synthase activity. Specificity is likely to be defined by residues in the lumenal catalytic domain that interact with the polar head groups of the phospholipid donors. SM is synthesized by both stages of the parasite life cycle, bloodstream forms (BSF) and procyclic forms (PCF), by transferring the phosphocholine from a 1,2-diacyl-sn-glycero-3-phosphocholine to an N-acylsphing-4-enine (ceramide) or an N-acylsphinganine (dihydroceramide). Similarly, EPC is synthesized by transferring phosphoethanolamine from a 1,2-diacyl-sn-glycero-3-phosphoethanolamine to ceramide or dihydroceramide by BSF and PCF, while IPC is confined to PCF. The ceramide/dihydroceramide ratios are skewed towards dihydroceramide in PCF parasites and ceramide in BSF parasites, this is likely due to differential expression and/or regulation of dihydroceramide desaturase, the enzyme responsible for converting dihydroceramide to ceramide. The protein is Phosphatidylcholine:ceramide cholinephosphotransferase 3 of Trypanosoma brucei brucei.